The primary structure comprises 241 residues: Caffeoyl-CoA O-methyltransferase (241 aa).

Methionine 1 bears the Blocked amino end (Met) mark. Lysine 15 is a substrate binding site. Residues threonine 57, glutamate 79, 81 to 82 (GV), serine 87, aspartate 105, and alanine 134 contribute to the S-adenosyl-L-methionine site. Aspartate 157 provides a ligand contact to substrate. Aspartate 157 is a binding site for a divalent metal cation. Position 159 (aspartate 159) interacts with S-adenosyl-L-methionine. A divalent metal cation-binding residues include aspartate 183 and asparagine 184. Substrate is bound at residue asparagine 188.

It belongs to the class I-like SAM-binding methyltransferase superfamily. Cation-dependent O-methyltransferase family. CCoAMT subfamily. In terms of assembly, homodimer. A divalent metal cation serves as cofactor. Roots and leaves.

It carries out the reaction (E)-caffeoyl-CoA + S-adenosyl-L-methionine = (E)-feruloyl-CoA + S-adenosyl-L-homocysteine + H(+). It functions in the pathway aromatic compound metabolism; phenylpropanoid biosynthesis. In terms of biological role, methylates caffeoyl-CoA to feruloyl-CoA and 5-hydroxyferuloyl-CoA to sinapoyl-CoA. Plays a role in the synthesis of feruloylated polysaccharides. Involved in the reinforcement of the plant cell wall. Also involved in the responding to wounding or pathogen challenge by the increased formation of cell wall-bound ferulic acid polymers. The sequence is that of Caffeoyl-CoA O-methyltransferase from Petroselinum crispum (Parsley).